Reading from the N-terminus, the 426-residue chain is 3-phosphoshikimate 1-carboxyvinyltransferase (426 aa).

3 residues coordinate 3-phosphoshikimate: Lys-22, Ser-23, and Arg-27. Residue Lys-22 participates in phosphoenolpyruvate binding. 2 residues coordinate phosphoenolpyruvate: Gly-96 and Arg-124. Positions 170, 171, 172, 198, 314, 337, and 341 each coordinate 3-phosphoshikimate. Gln-172 serves as a coordination point for phosphoenolpyruvate. Residue Asp-314 is the Proton acceptor of the active site. The phosphoenolpyruvate site is built by Arg-345, Arg-387, and Lys-412.

It belongs to the EPSP synthase family. Monomer.

It localises to the cytoplasm. The enzyme catalyses 3-phosphoshikimate + phosphoenolpyruvate = 5-O-(1-carboxyvinyl)-3-phosphoshikimate + phosphate. The protein operates within metabolic intermediate biosynthesis; chorismate biosynthesis; chorismate from D-erythrose 4-phosphate and phosphoenolpyruvate: step 6/7. Catalyzes the transfer of the enolpyruvyl moiety of phosphoenolpyruvate (PEP) to the 5-hydroxyl of shikimate-3-phosphate (S3P) to produce enolpyruvyl shikimate-3-phosphate and inorganic phosphate. This is 3-phosphoshikimate 1-carboxyvinyltransferase from Photobacterium damsela subsp. piscicida (Pasteurella piscicida).